The sequence spans 257 residues: Pyridoxine 5'-phosphate synthase (257 aa).

N16 contributes to the 3-amino-2-oxopropyl phosphate binding site. 18–19 (DH) is a 1-deoxy-D-xylulose 5-phosphate binding site. R27 contributes to the 3-amino-2-oxopropyl phosphate binding site. H52 serves as the catalytic Proton acceptor. 1-deoxy-D-xylulose 5-phosphate contacts are provided by R54 and H59. Catalysis depends on E79, which acts as the Proton acceptor. T109 lines the 1-deoxy-D-xylulose 5-phosphate pocket. H200 serves as the catalytic Proton donor. Residues G201 and 222–223 (GH) contribute to the 3-amino-2-oxopropyl phosphate site.

Belongs to the PNP synthase family. As to quaternary structure, homooctamer; tetramer of dimers.

The protein resides in the cytoplasm. It catalyses the reaction 3-amino-2-oxopropyl phosphate + 1-deoxy-D-xylulose 5-phosphate = pyridoxine 5'-phosphate + phosphate + 2 H2O + H(+). It functions in the pathway cofactor biosynthesis; pyridoxine 5'-phosphate biosynthesis; pyridoxine 5'-phosphate from D-erythrose 4-phosphate: step 5/5. Catalyzes the complicated ring closure reaction between the two acyclic compounds 1-deoxy-D-xylulose-5-phosphate (DXP) and 3-amino-2-oxopropyl phosphate (1-amino-acetone-3-phosphate or AAP) to form pyridoxine 5'-phosphate (PNP) and inorganic phosphate. The chain is Pyridoxine 5'-phosphate synthase from Burkholderia pseudomallei (strain K96243).